Consider the following 219-residue polypeptide: Histone H1.11R (219 aa).

2 stretches are compositionally biased toward low complexity: residues 1 to 20 (MAET…AAKA) and 28 to 40 (AAGG…PAGP). Disordered stretches follow at residues 1 to 42 (MAET…GPSV) and 89 to 219 (LVSK…AKKK). The H15 domain maps to 38-111 (AGPSVTELIT…GASGSFRLSK (74 aa)). 4 stretches are compositionally biased toward basic residues: residues 121-135 (PKKK…KAAA), 143-160 (KKPK…KAKK), 168-183 (KSVK…KKAV), and 192-219 (KAVK…AKKK).

This sequence belongs to the histone H1/H5 family.

It is found in the nucleus. It localises to the chromosome. Its function is as follows. Histones H1 are necessary for the condensation of nucleosome chains into higher-order structures. This Gallus gallus (Chicken) protein is Histone H1.11R.